The chain runs to 448 residues: N-succinylarginine dihydrolase (448 aa).

Residues glycine 19–serine 28, asparagine 110, and histidine 137–arginine 138 each bind substrate. Glutamate 174 is a catalytic residue. Residue arginine 214 coordinates substrate. Histidine 250 is a catalytic residue. Substrate-binding residues include aspartate 252 and asparagine 365. Cysteine 371 acts as the Nucleophile in catalysis.

This sequence belongs to the succinylarginine dihydrolase family. Homodimer.

The enzyme catalyses N(2)-succinyl-L-arginine + 2 H2O + 2 H(+) = N(2)-succinyl-L-ornithine + 2 NH4(+) + CO2. The protein operates within amino-acid degradation; L-arginine degradation via AST pathway; L-glutamate and succinate from L-arginine: step 2/5. In terms of biological role, catalyzes the hydrolysis of N(2)-succinylarginine into N(2)-succinylornithine, ammonia and CO(2). The protein is N-succinylarginine dihydrolase of Pseudomonas paraeruginosa (strain DSM 24068 / PA7) (Pseudomonas aeruginosa (strain PA7)).